We begin with the raw amino-acid sequence, 436 residues long: Xylose isomerase (436 aa).

Residues His-100 and Asp-103 contribute to the active site. Residues Glu-231, Glu-267, His-270, Asp-295, Asp-306, Asp-308, and Asp-338 each coordinate Mg(2+).

The protein belongs to the xylose isomerase family. In terms of assembly, homotetramer. It depends on Mg(2+) as a cofactor.

The protein localises to the cytoplasm. It carries out the reaction alpha-D-xylose = alpha-D-xylulofuranose. This is Xylose isomerase from Rhizobium johnstonii (strain DSM 114642 / LMG 32736 / 3841) (Rhizobium leguminosarum bv. viciae).